Reading from the N-terminus, the 89-residue chain is Small ribosomal subunit protein bS20 (89 aa).

Residues 1–28 (MANHYSALKRARQTETRTARNRANTSRM) form a disordered region.

This sequence belongs to the bacterial ribosomal protein bS20 family.

Binds directly to 16S ribosomal RNA. The chain is Small ribosomal subunit protein bS20 from Koribacter versatilis (strain Ellin345).